The following is a 1499-amino-acid chain: Ubiquitinating/deubiquitinating enzyme SdeA (1499 aa).

Residues 1-193 form a deubiquitinase region; that stretch reads MPKYVEGVEL…GKALRENTEK (193 aa). Residues His64 and Asp80 each act as for deubiquitinase activity in the active site. The active-site Nucleophile; for deubiquitinase activity is the Cys118. Residues 760–1000 are mono-ADP-ribosyltransferase; sequence PPTRLFRGLN…KALAAFPSDT (241 aa). 766–772 contacts NAD(+); that stretch reads RGLNLSE. Glu860 bears the 5-glutamyl glutamate mark. Residue Glu862 coordinates NAD(+). Residues 1059-1181 adopt a coiled-coil conformation; that stretch reads KEMGTIRREL…IDTKLADAYL (123 aa).

Belongs to the SidE family. Interacts with IcmS. Post-translationally, is able to ubiquitinate itself, but this modification is not required to ubiquitinate Rab33b. In terms of processing, glutamylated at Glu-860 by SidJ; glutamylation inhibits SdeA activity to catalyze the production of ADP-ribosylated ubiquitin.

It localises to the secreted. The protein localises to the host cell. The catalysed reaction is L-arginyl-[protein] + NAD(+) = N(omega)-(ADP-D-ribosyl)-L-arginyl-[protein] + nicotinamide + H(+). Its activity is regulated as follows. Ubiquitination catalyzed by SdeA is insensitive to the cysteine alkylation agent maleimide, suggesting that a cysteine conjugation of ubiquitin does not form during the reaction. Functionally, secreted effector that interferes with the host cell ubiquitin pathway and is required for intracellular bacterial replication. Catalyzes the ubiquitination of several mammalian Rab proteins (Rab33b, Rab1, Rab6a and Rab30) during L.pneumophila infection, without engaging the standard cellular enzyme cascade (E1 and E2). Transfers an ADP-ribose moiety from NAD to the 'Arg-42' residue of ubiquitin in a reaction that releases nicotinamide. The modified ubiquitin is subsequently transferred to serine residues of the substrate protein via a phosphoribose linker that results in the release of AMP. Cannot ubiquitinate the endosomal Rab5 or the cytoskeletal small GTPase Rac1. Also acts as a deubiquitinase (DUB), catalyzing the cleavage of three of the most abundant polyubiquitin chains ('Lys-11', 'Lys-48' and 'Lys-63') with a distinct preference for 'Lys-63' linkages; is thus able to efficiently remove 'Lys-63'-linked polyubiquitin chains from the phagosomal surface. Is also able to remove NEDD8 from neddylated proteins, but is unable to recognize SUMO. The DUB activity of SdeA is important for regulating the dynamics of ubiquitin association with the bacterial phagosome, but is dispensable for its role in intracellular bacterial replication. In Legionella pneumophila subsp. pneumophila (strain Philadelphia 1 / ATCC 33152 / DSM 7513), this protein is Ubiquitinating/deubiquitinating enzyme SdeA.